Reading from the N-terminus, the 346-residue chain is Angiopoietin-related protein 7 (346 aa).

A signal peptide spans 1–26 (MLKKPLSAVTWLCIFIVAFVSHPAWL). Positions 39–119 (QLKAANCCEE…DIMQLQAAQT (81 aa)) form a coiled coil. Asn-58 carries an N-linked (GlcNAc...) asparagine glycan. The Fibrinogen C-terminal domain occupies 122-343 (QTSADAIYDC…RVEMKIRPED (222 aa)). A disulfide bridge connects residues Cys-131 and Cys-162. Asn-253 and Asn-267 each carry an N-linked (GlcNAc...) asparagine glycan. Cysteines 285 and 298 form a disulfide.

Homotetramer; disulfide-linked. As to expression, highly expressed in the cornea (at protein level). Expression is restricted to the stromal layer. Also detected at the junction between the corneal stromal layer and the conjuctiva. Not detected in the sclera.

The protein localises to the secreted. Has a role in the formation and organization of the extracellular matrix. In the eye, it functions as a mediator of dexamethasone-induced matrix deposition in the trabecular meshwork, the tissue responsible for the outflow of the ocular aqueous humor and for the maintenance of intraocular pressure. Is a negative regulator of angiogenesis in the cornea, and plays a major role in maintaining corneal avascularity and transparency. This chain is Angiopoietin-related protein 7 (ANGPTL7), found in Homo sapiens (Human).